Consider the following 110-residue polypeptide: Large ribosomal subunit protein uL22 (110 aa).

This sequence belongs to the universal ribosomal protein uL22 family. As to quaternary structure, part of the 50S ribosomal subunit.

Its function is as follows. This protein binds specifically to 23S rRNA; its binding is stimulated by other ribosomal proteins, e.g. L4, L17, and L20. It is important during the early stages of 50S assembly. It makes multiple contacts with different domains of the 23S rRNA in the assembled 50S subunit and ribosome. Functionally, the globular domain of the protein is located near the polypeptide exit tunnel on the outside of the subunit, while an extended beta-hairpin is found that lines the wall of the exit tunnel in the center of the 70S ribosome. This chain is Large ribosomal subunit protein uL22, found in Vibrio campbellii (strain ATCC BAA-1116).